The chain runs to 382 residues: UDP-N-acetylglucosamine--N-acetylmuramyl-(pentapeptide) pyrophosphoryl-undecaprenol N-acetylglucosamine transferase (382 aa).

UDP-N-acetyl-alpha-D-glucosamine is bound by residues 22–24, Asn134, Arg186, Ser212, 285–290, and Gln311; these read TGG and ALTVAE.

It belongs to the glycosyltransferase 28 family. MurG subfamily.

The protein resides in the cell inner membrane. It catalyses the reaction di-trans,octa-cis-undecaprenyl diphospho-N-acetyl-alpha-D-muramoyl-L-alanyl-D-glutamyl-meso-2,6-diaminopimeloyl-D-alanyl-D-alanine + UDP-N-acetyl-alpha-D-glucosamine = di-trans,octa-cis-undecaprenyl diphospho-[N-acetyl-alpha-D-glucosaminyl-(1-&gt;4)]-N-acetyl-alpha-D-muramoyl-L-alanyl-D-glutamyl-meso-2,6-diaminopimeloyl-D-alanyl-D-alanine + UDP + H(+). It participates in cell wall biogenesis; peptidoglycan biosynthesis. Functionally, cell wall formation. Catalyzes the transfer of a GlcNAc subunit on undecaprenyl-pyrophosphoryl-MurNAc-pentapeptide (lipid intermediate I) to form undecaprenyl-pyrophosphoryl-MurNAc-(pentapeptide)GlcNAc (lipid intermediate II). The sequence is that of UDP-N-acetylglucosamine--N-acetylmuramyl-(pentapeptide) pyrophosphoryl-undecaprenol N-acetylglucosamine transferase from Pseudoalteromonas atlantica (strain T6c / ATCC BAA-1087).